Reading from the N-terminus, the 500-residue chain is Intracellular exo-alpha-(1-&gt;5)-L-arabinofuranosidase (500 aa).

Alpha-L-arabinofuranose-binding residues include Glu-28, Asn-73, and Asn-173. Glu-174 (proton donor/acceptor) is an active-site residue. Alpha-L-arabinofuranose is bound by residues Tyr-245, Glu-293, and Gln-350. Glu-293 serves as the catalytic Nucleophile.

Belongs to the glycosyl hydrolase 51 family. In terms of assembly, homohexamer; trimer of dimers.

It is found in the cytoplasm. It catalyses the reaction Hydrolysis of terminal non-reducing alpha-L-arabinofuranoside residues in alpha-L-arabinosides.. Its pathway is glycan metabolism; L-arabinan degradation. In terms of biological role, involved in the degradation of arabinan and is a key enzyme in the complete degradation of the plant cell wall. Catalyzes the cleavage of terminal alpha-(1-&gt;5)-arabinofuranosyl bonds in different hemicellulosic homopolysaccharides (branched and debranched arabinans). This is Intracellular exo-alpha-(1-&gt;5)-L-arabinofuranosidase (abfA) from Halalkalibacterium halodurans (strain ATCC BAA-125 / DSM 18197 / FERM 7344 / JCM 9153 / C-125) (Bacillus halodurans).